Here is a 302-residue protein sequence, read N- to C-terminus: Succinate--CoA ligase [ADP-forming] subunit alpha (302 aa).

Residues 17 to 20, Lys-43, and 96 to 98 contribute to the CoA site; these read TGST and ITE. Residue Tyr-159 participates in substrate binding. His-247 acts as the Tele-phosphohistidine intermediate in catalysis.

It belongs to the succinate/malate CoA ligase alpha subunit family. As to quaternary structure, heterotetramer of two alpha and two beta subunits.

It carries out the reaction succinate + ATP + CoA = succinyl-CoA + ADP + phosphate. The enzyme catalyses GTP + succinate + CoA = succinyl-CoA + GDP + phosphate. It participates in carbohydrate metabolism; tricarboxylic acid cycle; succinate from succinyl-CoA (ligase route): step 1/1. Functionally, succinyl-CoA synthetase functions in the citric acid cycle (TCA), coupling the hydrolysis of succinyl-CoA to the synthesis of either ATP or GTP and thus represents the only step of substrate-level phosphorylation in the TCA. The alpha subunit of the enzyme binds the substrates coenzyme A and phosphate, while succinate binding and nucleotide specificity is provided by the beta subunit. This is Succinate--CoA ligase [ADP-forming] subunit alpha from Staphylococcus epidermidis (strain ATCC 35984 / DSM 28319 / BCRC 17069 / CCUG 31568 / BM 3577 / RP62A).